A 684-amino-acid chain; its full sequence is Glycine--tRNA ligase beta subunit (684 aa).

The protein belongs to the class-II aminoacyl-tRNA synthetase family. Tetramer of two alpha and two beta subunits.

Its subcellular location is the cytoplasm. The enzyme catalyses tRNA(Gly) + glycine + ATP = glycyl-tRNA(Gly) + AMP + diphosphate. This chain is Glycine--tRNA ligase beta subunit, found in Pseudomonas putida (strain ATCC 47054 / DSM 6125 / CFBP 8728 / NCIMB 11950 / KT2440).